A 396-amino-acid chain; its full sequence is Elongation factor Tu (396 aa).

The region spanning 11–205 (KPHVNIGTIG…TVDEYIPTPE (195 aa)) is the tr-type G domain. A G1 region spans residues 20–27 (GHVDHGKT). 20 to 27 (GHVDHGKT) serves as a coordination point for GTP. Residue T27 participates in Mg(2+) binding. A G2 region spans residues 61 to 65 (GITIN). Residues 82 to 85 (DAPG) form a G3 region. GTP is bound by residues 82–86 (DAPGH) and 137–140 (NKCD). The interval 137-140 (NKCD) is G4. A G5 region spans residues 175-177 (SAL).

It belongs to the TRAFAC class translation factor GTPase superfamily. Classic translation factor GTPase family. EF-Tu/EF-1A subfamily. Monomer.

The protein resides in the cytoplasm. It catalyses the reaction GTP + H2O = GDP + phosphate + H(+). In terms of biological role, GTP hydrolase that promotes the GTP-dependent binding of aminoacyl-tRNA to the A-site of ribosomes during protein biosynthesis. This is Elongation factor Tu from Lactobacillus helveticus (strain DPC 4571).